The sequence spans 489 residues: FAD-containing monooxygenase EthA (489 aa).

FAD-binding positions include serine 15, glutamate 36, 44 to 47, aspartate 56, and valine 104; that span reads TWDL. 54–56 contacts NADP(+); sequence RSD. NADP(+) is bound by residues 183–189 and 207–208; these read SGATAVT and RS.

The protein belongs to the FAD-binding monooxygenase family. The cofactor is FAD.

The protein localises to the cell membrane. The catalysed reaction is ethionamide + NADPH + O2 + H(+) = ethionamide S-oxide + NADP(+) + H2O. Monooxygenase able to convert a wide range of ketones to the corresponding esters or lactones via a Baeyer-Villiger oxidation reaction. Can act on long-chain aliphatic ketones (2-hexanone to 2-dodecanone) and on aromatic ketones (phenylacetone and benzylacetone). Is also able to catalyze enantioselective sulfoxidation of methyl-p-tolylsulfide. In vivo, likely functions as a BVMO, but the exact nature of the physiological substrate(s) remains to be established. Its function is as follows. Is responsible for the activation of several thiocarbamide-containing pro-drugs, such as ethionamide (ETH), isoxyl (ISO) and thiacetazone (TAC), into reactive species. In Mycobacterium bovis (strain ATCC BAA-935 / AF2122/97), this protein is FAD-containing monooxygenase EthA (ethA).